Reading from the N-terminus, the 90-residue chain is Small ribosomal subunit protein bS16 (90 aa).

This sequence belongs to the bacterial ribosomal protein bS16 family.

The protein is Small ribosomal subunit protein bS16 of Lactiplantibacillus plantarum (strain ATCC BAA-793 / NCIMB 8826 / WCFS1) (Lactobacillus plantarum).